The chain runs to 112 residues: Cell cycle protein GpsB (112 aa).

The stretch at 32–75 (LDDIIKDYETYISTIEELRQENTRLKEEVKQAKKRQEAAQTTVS) forms a coiled coil.

The protein belongs to the GpsB family. Forms polymers through the coiled coil domains. Interacts with PBP1, MreC and EzrA.

It localises to the cytoplasm. In terms of biological role, divisome component that associates with the complex late in its assembly, after the Z-ring is formed, and is dependent on DivIC and PBP2B for its recruitment to the divisome. Together with EzrA, is a key component of the system that regulates PBP1 localization during cell cycle progression. Its main role could be the removal of PBP1 from the cell pole after pole maturation is completed. Also contributes to the recruitment of PBP1 to the division complex. Not essential for septum formation. The chain is Cell cycle protein GpsB from Streptococcus mutans serotype c (strain ATCC 700610 / UA159).